The chain runs to 245 residues: MATRTQFENSNEVGVFSNLTNSYCLVAVGGSENFYSAFEAELGDVIPIVHTTIAGTRIVGRMTSGNRRGLLVPTQTTDQELMHLRNSLPDSIKIQRVEERLSALGNVICCNDYVALVHPDIERETEELIADVLGVEVFRQTIAGNVLVGSYCSLSNQGGLVHPQTSIQDQEELSSLLQVPLVAGTVNRGSSVVGAGMVVNDWLSVAGLDTTAPELSVIESIFRLQDAQPDAIGGNLRDTLIETYS.

Residues Ser174 and Ser175 each carry the phosphoserine; by CK1 modification.

It belongs to the eIF-6 family. Monomer. Associates with the 60S ribosomal subunit. In terms of processing, phosphorylation at Ser-174 and Ser-175 promotes nuclear export.

The protein localises to the cytoplasm. The protein resides in the nucleus. It is found in the nucleolus. Its function is as follows. Binds to the 60S ribosomal subunit and prevents its association with the 40S ribosomal subunit to form the 80S initiation complex in the cytoplasm. Is also involved in ribosome biogenesis. Associates with pre-60S subunits in the nucleus and is involved in its nuclear export. This is Eukaryotic translation initiation factor 6 from Candida albicans (strain SC5314 / ATCC MYA-2876) (Yeast).